We begin with the raw amino-acid sequence, 872 residues long: MKQMSSAQVRQMWLDFWATKGHAVEPSVSLVPVNDPTLLWINSGVATLKKYFDGTIIPENPRITNAQKAIRTNDIENVGKTARHHTMFEMLGNFSIGDYFRDEAIEWAYELLTSPEWFDFPKDKLYMTYYPDDKDSYNRWIAMGVEPSHLIPIEDNFWEIGAGPSGPDTEIFFDRGEAFDPENIGVRLLEEDIENDRYIEIWNIVLSQFNADPAVPRSEYKELPHKNIDTGAGLERLVAVIQGAKTNFETDLFMPIIREVEKLSGKVYDQDGDNMSFKVIADHIRSLSFAIGDGALPGNEGRGYVLRRLLRRASMHGQKLGINEPFLYKLVPTVGKIMESYYPEVLEKQEFIEKIIKSEEESFARTLHSGQHFAETIVADLKAKGQTVISGQDAFKLYDTYGFPLELTEEIAEEADMTVDRAGFEAAMKEQQDRARASVVKGGSMGMQNETLQAITVESAFNYEKEELTAELLAIVADDAAVESVETGTAALIFAETPFYAEMGGQVADHGQIFDGAGNLVAQVTDVQKAPNGQPLHTVEVLAPLALGQSYKLEIDHSRRHRVMKNHTATHLLHAALHNVLGNHATQAGSLNEVEFLRFDFTHFQAVTAEELRAIEQEVNEKIWEALAIETVETDIDTAKEMGAMALFGEKYGKEVRVVTIGDYSVELCGGTHVGNTSEIGIFKIVKEEGIGSGTRRILAVTSKEAFEAYREEEEALKAIAATLKAPQIKEVPHKVEALQEQLRQLQKENAELKEKAAAAASGEVFKDVQEANGHSFIASQVSVSDAGALRTFADTWKQKDYSDVLVLVAAIGDKVNVLAASKTKDVHAGNLIKELAPIVDGRGGGKPDMAMAGGSKQSAIPDLLAAVAEKL.

Residues histidine 567, histidine 571, cysteine 669, and histidine 673 each contribute to the Zn(2+) site.

It belongs to the class-II aminoacyl-tRNA synthetase family. Zn(2+) is required as a cofactor.

It is found in the cytoplasm. It carries out the reaction tRNA(Ala) + L-alanine + ATP = L-alanyl-tRNA(Ala) + AMP + diphosphate. Functionally, catalyzes the attachment of alanine to tRNA(Ala) in a two-step reaction: alanine is first activated by ATP to form Ala-AMP and then transferred to the acceptor end of tRNA(Ala). Also edits incorrectly charged Ser-tRNA(Ala) and Gly-tRNA(Ala) via its editing domain. This chain is Alanine--tRNA ligase, found in Streptococcus sanguinis (strain SK36).